Reading from the N-terminus, the 372-residue chain is 4-hydroxy-3-methylbut-2-en-1-yl diphosphate synthase (flavodoxin) (372 aa).

Cys270, Cys273, Cys305, and Glu312 together coordinate [4Fe-4S] cluster.

Belongs to the IspG family. Requires [4Fe-4S] cluster as cofactor.

The enzyme catalyses (2E)-4-hydroxy-3-methylbut-2-enyl diphosphate + oxidized [flavodoxin] + H2O + 2 H(+) = 2-C-methyl-D-erythritol 2,4-cyclic diphosphate + reduced [flavodoxin]. It participates in isoprenoid biosynthesis; isopentenyl diphosphate biosynthesis via DXP pathway; isopentenyl diphosphate from 1-deoxy-D-xylulose 5-phosphate: step 5/6. Its function is as follows. Converts 2C-methyl-D-erythritol 2,4-cyclodiphosphate (ME-2,4cPP) into 1-hydroxy-2-methyl-2-(E)-butenyl 4-diphosphate. In Salmonella schwarzengrund (strain CVM19633), this protein is 4-hydroxy-3-methylbut-2-en-1-yl diphosphate synthase (flavodoxin).